The primary structure comprises 123 residues: MPTINQLIRKPRQPVAARNKVPAMEACPQKRGVCTRVYTTTPKKPNSALRKVARVRLTNGFEVTSYIPGEGHNLQEHSVVMIRGGRVKDLPGVRYHIIRGTLDTQGVKDRRQRRSKYGAKRPK.

Residue D89 is modified to 3-methylthioaspartic acid. The interval 101–123 (TLDTQGVKDRRQRRSKYGAKRPK) is disordered. The span at 110-123 (RRQRRSKYGAKRPK) shows a compositional bias: basic residues.

This sequence belongs to the universal ribosomal protein uS12 family. In terms of assembly, part of the 30S ribosomal subunit. Contacts proteins S8 and S17. May interact with IF1 in the 30S initiation complex.

Its function is as follows. With S4 and S5 plays an important role in translational accuracy. In terms of biological role, interacts with and stabilizes bases of the 16S rRNA that are involved in tRNA selection in the A site and with the mRNA backbone. Located at the interface of the 30S and 50S subunits, it traverses the body of the 30S subunit contacting proteins on the other side and probably holding the rRNA structure together. The combined cluster of proteins S8, S12 and S17 appears to hold together the shoulder and platform of the 30S subunit. In Paramagnetospirillum magneticum (strain ATCC 700264 / AMB-1) (Magnetospirillum magneticum), this protein is Small ribosomal subunit protein uS12.